A 274-amino-acid polypeptide reads, in one-letter code: MSYSALEAAIEAAWEARETITPATKGETREAIEATLEALDKGSLRVAEKRGADWHVNQWAKKAVLLGFRLKDMEVQTGGPQAGTWWDKVDSKFAQWGEAQWKAAGFRAVPNCVVRRSAYIARGVVLMPSFVNLGAYVDEGTMVDTWATVGSCAQIGKNVHLSGGVGIGGVLEPMQAGPTIIEDNCFIGARSEVVEGCIVREGSVLGMGVFIGKSTKIVDRETGEVMYGEVPAGSVVVAGSMPSKGGVNLYCAVIVKRVDAQTRSKTSINELLRD.

The substrate site is built by Arg107 and Asp144.

It belongs to the transferase hexapeptide repeat family. As to quaternary structure, homotrimer.

Its subcellular location is the cytoplasm. The catalysed reaction is (S)-2,3,4,5-tetrahydrodipicolinate + succinyl-CoA + H2O = (S)-2-succinylamino-6-oxoheptanedioate + CoA. It participates in amino-acid biosynthesis; L-lysine biosynthesis via DAP pathway; LL-2,6-diaminopimelate from (S)-tetrahydrodipicolinate (succinylase route): step 1/3. The protein is 2,3,4,5-tetrahydropyridine-2,6-dicarboxylate N-succinyltransferase of Cereibacter sphaeroides (strain ATCC 17023 / DSM 158 / JCM 6121 / CCUG 31486 / LMG 2827 / NBRC 12203 / NCIMB 8253 / ATH 2.4.1.) (Rhodobacter sphaeroides).